The chain runs to 396 residues: Flavohemoprotein (396 aa).

Residues 1 to 136 enclose the Globin domain; it reads MLDAQTIATV…LANVFIHREA (136 aa). His85 lines the heme b pocket. Residues Tyr95 and Glu135 each act as charge relay system in the active site. The tract at residues 147–396 is reductase; sequence GGWEGTRPFR…YECFGPHKVL (250 aa). The 106-residue stretch at 150-255 folds into the FAD-binding FR-type domain; the sequence is EGTRPFRIVA…AAPAGDFFMN (106 aa). FAD contacts are provided by residues Tyr188 and 204 to 207; that span reads RQYS. 268-273 lines the NADP(+) pocket; it reads GVGQTP. Residue 389–392 participates in FAD binding; it reads CFGP.

This sequence belongs to the globin family. Two-domain flavohemoproteins subfamily. The protein in the C-terminal section; belongs to the flavoprotein pyridine nucleotide cytochrome reductase family. The cofactor is heme b. FAD is required as a cofactor.

It catalyses the reaction 2 nitric oxide + NADPH + 2 O2 = 2 nitrate + NADP(+) + H(+). The enzyme catalyses 2 nitric oxide + NADH + 2 O2 = 2 nitrate + NAD(+) + H(+). Functionally, is involved in NO detoxification in an aerobic process, termed nitric oxide dioxygenase (NOD) reaction that utilizes O(2) and NAD(P)H to convert NO to nitrate, which protects the bacterium from various noxious nitrogen compounds. Therefore, plays a central role in the inducible response to nitrosative stress. This chain is Flavohemoprotein, found in Salmonella typhi.